A 258-amino-acid chain; its full sequence is MKNYLLQIEYFGRNYCGWQRQSHSPSVQEELEKALSKIANQNIEVTCAGRTDTGVHATSQIVNFYSDAERPLSAWQRGVNALLPQDIKILAVQQVDNNFNSRFTAINRTYNYIIYNSATSSPIFAEHCLWENRELDIDKMNQACEYLLGEQDFSSFRSSQCQSNTPFRNIQKAEFIKQGSFIVFEVVGNAFLHHMIRNLVGSLLKVGLGFESPEWIKVVLEAKDRTQAAETAKAHGLYFVGVEYPEFSFKRQIIKLFC.

D52 acts as the Nucleophile in catalysis. Position 110 (Y110) interacts with substrate.

It belongs to the tRNA pseudouridine synthase TruA family. In terms of assembly, homodimer.

It carries out the reaction uridine(38/39/40) in tRNA = pseudouridine(38/39/40) in tRNA. Formation of pseudouridine at positions 38, 39 and 40 in the anticodon stem and loop of transfer RNAs. In Francisella tularensis subsp. novicida (strain U112), this protein is tRNA pseudouridine synthase A.